The sequence spans 197 residues: HTH-type transcriptional regulator BetI (197 aa).

The 61-residue stretch at 8–68 (PIRRQQLIQA…ATMRHLMNAL (61 aa)) folds into the HTH tetR-type domain. The segment at residues 31-50 (SIALIARLAGVSNGIISHYF) is a DNA-binding region (H-T-H motif).

It participates in amine and polyamine biosynthesis; betaine biosynthesis via choline pathway [regulation]. Repressor involved in the biosynthesis of the osmoprotectant glycine betaine. It represses transcription of the choline transporter BetT and the genes of BetAB involved in the synthesis of glycine betaine. This Pseudomonas savastanoi pv. phaseolicola (strain 1448A / Race 6) (Pseudomonas syringae pv. phaseolicola (strain 1448A / Race 6)) protein is HTH-type transcriptional regulator BetI.